We begin with the raw amino-acid sequence, 120 residues long: Large ribosomal subunit protein bL12 (120 aa).

Belongs to the bacterial ribosomal protein bL12 family. As to quaternary structure, homodimer. Part of the ribosomal stalk of the 50S ribosomal subunit. Forms a multimeric L10(L12)X complex, where L10 forms an elongated spine to which 2 to 4 L12 dimers bind in a sequential fashion. Binds GTP-bound translation factors.

Functionally, forms part of the ribosomal stalk which helps the ribosome interact with GTP-bound translation factors. Is thus essential for accurate translation. The polypeptide is Large ribosomal subunit protein bL12 (Listeria innocua serovar 6a (strain ATCC BAA-680 / CLIP 11262)).